The sequence spans 490 residues: MDGLEDGPLDASTATSQKPQRQVRLKLTSRHEDIALPESTGPILVPTGLRRYALSTLVNNLLESEKPIPFEFLINGTYLRTSIDEYLTANGISAETTLDVEYVRALVPPLHVASFLHDDWVSAVDVLSDTSIAGSKSRVNAGQERILSASYDGLLRMWNMSSETIALSPAAREGGHTASVKCARMVSPSQIISSGLDRTVRLWKYTESEDGFSASITPQLELYGHKGSVDSISMHAQSHRILSASADHSVGFWSTRKSENPAAPESLLPSNTSRSSKRRKLNSSVSVPQRGPLALFKSHTAPVSAAIFDAKDPTVGYSTSWDHSLRTWDLVTGTLVDTRTASHSLLSVSHMPELSLLASGTSARHITLIDPRASATTVSALTLRGHTNAVVCLARDPDSTYGLISGSHDGTCRIWDVRSTRTDKDGVMGESIYSIPRKSVGGAGKRVGGEGVKVFDVCWDKSVGIVSSGEDKMIQINRGEGVLPNGGSDR.

Positions 1–22 are disordered; it reads MDGLEDGPLDASTATSQKPQRQ. The segment at 23 to 104 is ubiquitin-like (UBL) domain; it reads VRLKLTSRHE…ETTLDVEYVR (82 aa). WD repeat units lie at residues 116-168, 175-213, 224-263, 298-338, 340-379, 385-425, and 449-487; these read LHDD…IALS, GHTASVKCARMVSPSQIISSGLDRTVRLWKYTESEDGFS, GHKGSVDSISMHAQSHRILSASADHSVGFWSTRKSENPAA, SHTA…LVDT, TASHSLLSVSHMPELSLLASGTSARHITLIDPRASATTVS, GHTN…TDKD, and GEGVKVFDVCWDKSVGIVSSGEDKMIQINRGEGVLPNGG. The segment at 255 to 286 is disordered; the sequence is TRKSENPAAPESLLPSNTSRSSKRRKLNSSVS.

It belongs to the WD repeat WDR12/YTM1 family. As to quaternary structure, component of the NOP7 complex, composed of ERB1, NOP7 and YTM1. The complex is held together by ERB1, which interacts with NOP7 via its N-terminal domain and with YTM1 via a high-affinity interaction between the seven-bladed beta-propeller domains of the 2 proteins. The NOP7 complex associates with the 66S pre-ribosome. Interacts (via UBL domain) with MDN1 (via VWFA/MIDAS domain).

It localises to the nucleus. Its subcellular location is the nucleolus. It is found in the nucleoplasm. In terms of biological role, component of the NOP7 complex, which is required for maturation of the 25S and 5.8S ribosomal RNAs and formation of the 60S ribosome. This Ajellomyces capsulatus (strain NAm1 / WU24) (Darling's disease fungus) protein is Ribosome biogenesis protein YTM1.